The following is a 360-amino-acid chain: GTPase Obg (360 aa).

The region spanning Met-1–Ile-156 is the Obg domain. Residues Ala-157–Pro-360 enclose the OBG-type G domain. GTP contacts are provided by residues Gly-163–Ser-170, Phe-188–Val-192, Asp-210–Gly-213, Asn-279–Asp-282, and Ser-341–Val-343. The Mg(2+) site is built by Ser-170 and Thr-190.

The protein belongs to the TRAFAC class OBG-HflX-like GTPase superfamily. OBG GTPase family. In terms of assembly, monomer. Requires Mg(2+) as cofactor.

It localises to the cytoplasm. Its function is as follows. An essential GTPase which binds GTP, GDP and possibly (p)ppGpp with moderate affinity, with high nucleotide exchange rates and a fairly low GTP hydrolysis rate. Plays a role in control of the cell cycle, stress response, ribosome biogenesis and in those bacteria that undergo differentiation, in morphogenesis control. In Helicobacter acinonychis (strain Sheeba), this protein is GTPase Obg.